The primary structure comprises 403 residues: tRNA(Met) cytidine acetate ligase (403 aa).

Residues 7–20 (VVEY…HAYH), glycine 101, asparagine 164, and 189–190 (RI) each bind ATP.

The protein belongs to the TmcAL family.

It is found in the cytoplasm. The catalysed reaction is cytidine(34) in elongator tRNA(Met) + acetate + ATP = N(4)-acetylcytidine(34) in elongator tRNA(Met) + AMP + diphosphate. Its function is as follows. Catalyzes the formation of N(4)-acetylcytidine (ac(4)C) at the wobble position of elongator tRNA(Met), using acetate and ATP as substrates. First activates an acetate ion to form acetyladenylate (Ac-AMP) and then transfers the acetyl group to tRNA to form ac(4)C34. The chain is tRNA(Met) cytidine acetate ligase from Lysinibacillus sphaericus (strain C3-41).